A 133-amino-acid chain; its full sequence is Large ribosomal subunit protein uL22 (133 aa).

The protein belongs to the universal ribosomal protein uL22 family. As to quaternary structure, part of the 50S ribosomal subunit.

Its function is as follows. This protein binds specifically to 23S rRNA; its binding is stimulated by other ribosomal proteins, e.g. L4, L17, and L20. It is important during the early stages of 50S assembly. It makes multiple contacts with different domains of the 23S rRNA in the assembled 50S subunit and ribosome. In terms of biological role, the globular domain of the protein is located near the polypeptide exit tunnel on the outside of the subunit, while an extended beta-hairpin is found that lines the wall of the exit tunnel in the center of the 70S ribosome. The protein is Large ribosomal subunit protein uL22 of Granulibacter bethesdensis (strain ATCC BAA-1260 / CGDNIH1).